Reading from the N-terminus, the 235-residue chain is 7-cyano-7-deazaguanine synthase (235 aa).

ATP is bound at residue Cys7–Ala17. Residues Cys185, Cys193, Cys196, and Cys199 each contribute to the Zn(2+) site.

The protein belongs to the QueC family. The cofactor is Zn(2+).

The enzyme catalyses 7-carboxy-7-deazaguanine + NH4(+) + ATP = 7-cyano-7-deazaguanine + ADP + phosphate + H2O + H(+). The protein operates within purine metabolism; 7-cyano-7-deazaguanine biosynthesis. In terms of biological role, catalyzes the ATP-dependent conversion of 7-carboxy-7-deazaguanine (CDG) to 7-cyano-7-deazaguanine (preQ(0)). The protein is 7-cyano-7-deazaguanine synthase of Allorhizobium ampelinum (strain ATCC BAA-846 / DSM 112012 / S4) (Agrobacterium vitis (strain S4)).